We begin with the raw amino-acid sequence, 77 residues long: Conotoxin King-Kong 1 (77 aa).

The N-terminal stretch at 1–22 (MKLTCMMIVAVLFLTAWTFATA) is a signal peptide. Residues 23–49 (DDSSNGLENLFSKAHHEMKNPEASKLN) constitute a propeptide that is removed on maturation. Disulfide bonds link cysteine 52–cysteine 67, cysteine 59–cysteine 71, and cysteine 66–cysteine 76. Methionine sulfoxide; partial is present on methionine 61.

It belongs to the conotoxin O1 superfamily. As to expression, expressed by the venom duct.

It is found in the secreted. The sequence is that of Conotoxin King-Kong 1 from Conus textile (Cloth-of-gold cone).